We begin with the raw amino-acid sequence, 441 residues long: Ankyrin repeat and MYND domain-containing protein 2 (441 aa).

ANK repeat units lie at residues 45–74 (NGMTPLMHAAYKGKLDMCKLLLRHGADVNC), 79–108 (HGYTALMFAALSGNKDITWVMLEAGAETDV), and 159–188 (KLAGPLHKIITTTNLHPVKIVMLVNENPLL). 8 residues coordinate Zn(2+): cysteine 320, cysteine 323, cysteine 332, cysteine 335, cysteine 341, cysteine 345, histidine 353, and cysteine 357. The segment at 320-357 (CTTCGEKGASKRCSVCKMVIYCDQTCQKTHWFTHKKIC) adopts an MYND-type zinc-finger fold. A compositionally biased stretch (basic and acidic residues) spans 374 to 384 (EKRQEENHGKL). The tract at residues 374 to 441 (EKRQEENHGK…APAGPQVSEE (68 aa)) is disordered.

In terms of assembly, interacts with the retinal-specific guanylyl cyclase GC1.

The protein localises to the cell projection. It is found in the cilium. In terms of biological role, may be involved in the trafficking of signaling proteins to the cilia. The protein is Ankyrin repeat and MYND domain-containing protein 2 (ANKMY2) of Homo sapiens (Human).